Here is a 130-residue protein sequence, read N- to C-terminus: MAENQYYGTGRRKSSAARVFLKPGSGKIVINQRSLEVYFGRETARMVVNQPLELVDMVTKFDMYITVKGGGISGQAGAIRHGITRALMEYDESLRGELRKAGFVTRDAREVERKKVGLRKARRRPQFSKR.

Belongs to the universal ribosomal protein uS9 family.

This Yersinia enterocolitica serotype O:8 / biotype 1B (strain NCTC 13174 / 8081) protein is Small ribosomal subunit protein uS9.